The following is a 290-amino-acid chain: HTH-type transcriptional activator RhaR (290 aa).

In terms of domain architecture, HTH araC/xylS-type spans 179-277 (DLIMSALQQS…GMTPRDYRQR (99 aa)). 2 consecutive DNA-binding regions (H-T-H motif) follow at residues 196–217 (ANFC…RQQT) and 244–267 (ISDI…TREA).

As to quaternary structure, binds DNA as a dimer.

The protein resides in the cytoplasm. Activates expression of the rhaSR operon in response to L-rhamnose. This chain is HTH-type transcriptional activator RhaR, found in Yersinia pseudotuberculosis serotype O:3 (strain YPIII).